The following is a 325-amino-acid chain: D-alanine--D-alanine ligase (325 aa).

Positions 109–309 constitute an ATP-grasp domain; sequence KRVCKERMLP…FCTLLDQLIE (201 aa). 136–191 is an ATP binding site; it reads CRRLPFPMFVKPANLGSSVGISKAHDEQELEAAFSLAKQYDRKIIVERGIEGRELE. Residues aspartate 262, glutamate 276, and asparagine 278 each contribute to the Mg(2+) site.

It belongs to the D-alanine--D-alanine ligase family. Mg(2+) serves as cofactor. It depends on Mn(2+) as a cofactor.

The protein localises to the cytoplasm. The enzyme catalyses 2 D-alanine + ATP = D-alanyl-D-alanine + ADP + phosphate + H(+). It functions in the pathway cell wall biogenesis; peptidoglycan biosynthesis. Functionally, cell wall formation. This chain is D-alanine--D-alanine ligase, found in Solibacter usitatus (strain Ellin6076).